A 765-amino-acid chain; its full sequence is Protein transport protein sec23-2 (765 aa).

Zn(2+) is bound by residues C56, C60, C79, and C82. Phosphoserine is present on residues S565 and S566.

This sequence belongs to the SEC23/SEC24 family. SEC23 subfamily. In terms of assembly, the COPII coat is composed of at least 5 proteins: the sec23/24 complex, the sec13/31 complex, and the protein sar1.

The protein resides in the cytoplasm. Its subcellular location is the cytoplasmic vesicle. It is found in the COPII-coated vesicle membrane. It localises to the endoplasmic reticulum membrane. The protein localises to the golgi apparatus membrane. Its function is as follows. Component of the coat protein complex II (COPII) which promotes the formation of transport vesicles from the endoplasmic reticulum (ER). The coat has two main functions, the physical deformation of the endoplasmic reticulum membrane into vesicles and the selection of cargo molecules. The polypeptide is Protein transport protein sec23-2 (sec232) (Schizosaccharomyces pombe (strain 972 / ATCC 24843) (Fission yeast)).